A 221-amino-acid chain; its full sequence is ATP phosphoribosyltransferase (221 aa).

This sequence belongs to the ATP phosphoribosyltransferase family. Short subfamily. In terms of assembly, heteromultimer composed of HisG and HisZ subunits.

It localises to the cytoplasm. It catalyses the reaction 1-(5-phospho-beta-D-ribosyl)-ATP + diphosphate = 5-phospho-alpha-D-ribose 1-diphosphate + ATP. It functions in the pathway amino-acid biosynthesis; L-histidine biosynthesis; L-histidine from 5-phospho-alpha-D-ribose 1-diphosphate: step 1/9. In terms of biological role, catalyzes the condensation of ATP and 5-phosphoribose 1-diphosphate to form N'-(5'-phosphoribosyl)-ATP (PR-ATP). Has a crucial role in the pathway because the rate of histidine biosynthesis seems to be controlled primarily by regulation of HisG enzymatic activity. The polypeptide is ATP phosphoribosyltransferase (Carboxydothermus hydrogenoformans (strain ATCC BAA-161 / DSM 6008 / Z-2901)).